The sequence spans 147 residues: uncharacterized protein (147 aa).

The protein to M.pneumoniae MPN_465.

This is an uncharacterized protein from Mycoplasma pneumoniae (strain ATCC 29342 / M129 / Subtype 1) (Mycoplasmoides pneumoniae).